A 447-amino-acid chain; its full sequence is Na(+)-translocating NADH-quinone reductase subunit A (447 aa).

This sequence belongs to the NqrA family. As to quaternary structure, composed of six subunits; NqrA, NqrB, NqrC, NqrD, NqrE and NqrF.

It carries out the reaction a ubiquinone + n Na(+)(in) + NADH + H(+) = a ubiquinol + n Na(+)(out) + NAD(+). Its function is as follows. NQR complex catalyzes the reduction of ubiquinone-1 to ubiquinol by two successive reactions, coupled with the transport of Na(+) ions from the cytoplasm to the periplasm. NqrA to NqrE are probably involved in the second step, the conversion of ubisemiquinone to ubiquinol. This Hahella chejuensis (strain KCTC 2396) protein is Na(+)-translocating NADH-quinone reductase subunit A.